We begin with the raw amino-acid sequence, 380 residues long: Flap endonuclease 1-A (380 aa).

Residues 1-105 are N-domain; that stretch reads MGIKGLTKLL…EELAKRFSKR (105 aa). Mg(2+) is bound at residue D34. R71 is a binding site for DNA. D87, E159, E161, D180, and D182 together coordinate Mg(2+). Residues 123–254 form an I-domain region; sequence AVEKLSKRTV…QTALKLIRQH (132 aa). E159 lines the DNA pocket. 2 residues coordinate DNA: G232 and D234. Residue D234 coordinates Mg(2+). The tract at residues 336 to 344 is interaction with PCNA; the sequence is SQGRLESFF. Positions 351-380 are disordered; the sequence is SAPLKRKETSDKTSKAAAANKKTKAGGKKK. Residues 355–364 are compositionally biased toward basic and acidic residues; that stretch reads KRKETSDKTS. Over residues 371-380 the composition is skewed to basic residues; the sequence is KKTKAGGKKK.

This sequence belongs to the XPG/RAD2 endonuclease family. FEN1 subfamily. Interacts with PCNA. Three molecules of FEN1 bind to one PCNA trimer with each molecule binding to one PCNA monomer. PCNA stimulates the nuclease activity without altering cleavage specificity. The cofactor is Mg(2+). Post-translationally, phosphorylated. Phosphorylation upon DNA damage induces relocalization to the nuclear plasma.

It is found in the nucleus. It localises to the nucleolus. The protein localises to the nucleoplasm. The protein resides in the mitochondrion. Functionally, structure-specific nuclease with 5'-flap endonuclease and 5'-3' exonuclease activities involved in DNA replication and repair. During DNA replication, cleaves the 5'-overhanging flap structure that is generated by displacement synthesis when DNA polymerase encounters the 5'-end of a downstream Okazaki fragment. It enters the flap from the 5'-end and then tracks to cleave the flap base, leaving a nick for ligation. Also involved in the long patch base excision repair (LP-BER) pathway, by cleaving within the apurinic/apyrimidinic (AP) site-terminated flap. Acts as a genome stabilization factor that prevents flaps from equilibrating into structures that lead to duplications and deletions. Also possesses 5'-3' exonuclease activity on nicked or gapped double-stranded DNA, and exhibits RNase H activity. Also involved in replication and repair of rDNA and in repairing mitochondrial DNA. This chain is Flap endonuclease 1-A, found in Sorghum bicolor (Sorghum).